The primary structure comprises 278 residues: Phosphatidylglycerol--prolipoprotein diacylglyceryl transferase (278 aa).

4 helical membrane-spanning segments follow: residues 17-37, 57-77, 89-109, and 119-139; these read LAVR…ILLG, ALFY…VLFY, ILAI…VAIA, and LSWL…LGAG. Arg-140 is an a 1,2-diacyl-sn-glycero-3-phospho-(1'-sn-glycerol) binding site. The next 3 helical transmembrane spans lie at 174 to 194, 200 to 220, and 233 to 253; these read QLYE…LYSA, GAVT…CEFF, and LGIS…IALL.

The protein belongs to the Lgt family.

It is found in the cell inner membrane. It catalyses the reaction L-cysteinyl-[prolipoprotein] + a 1,2-diacyl-sn-glycero-3-phospho-(1'-sn-glycerol) = an S-1,2-diacyl-sn-glyceryl-L-cysteinyl-[prolipoprotein] + sn-glycerol 1-phosphate + H(+). Its pathway is protein modification; lipoprotein biosynthesis (diacylglyceryl transfer). In terms of biological role, catalyzes the transfer of the diacylglyceryl group from phosphatidylglycerol to the sulfhydryl group of the N-terminal cysteine of a prolipoprotein, the first step in the formation of mature lipoproteins. This is Phosphatidylglycerol--prolipoprotein diacylglyceryl transferase from Nitrosomonas europaea (strain ATCC 19718 / CIP 103999 / KCTC 2705 / NBRC 14298).